A 244-amino-acid polypeptide reads, in one-letter code: Venom nerve growth factor 3 (244 aa).

Positions 1 to 18 (MSMLCYTLIIAFLIGIWA) are cleaved as a signal peptide. Residues 19 to 125 (APKSEDNVPL…TLNRNIRAKR (107 aa)) constitute a propeptide that is removed on maturation. A compositionally biased stretch (basic and acidic residues) spans 47-66 (GLKTSRNTDQRHPAPKKAED). Residues 47–67 (GLKTSRNTDQRHPAPKKAEDQ) are disordered. Cystine bridges form between C139-C205, C181-C233, and C193-C235.

Belongs to the NGF-beta family. In terms of assembly, homodimer; non-covalently linked. As to expression, expressed by the venom gland.

Its subcellular location is the secreted. Its function is as follows. Nerve growth factor is important for the development and maintenance of the sympathetic and sensory nervous systems. It stimulates division and differentiation of sympathetic and embryonic sensory neurons as well as basal forebrain cholinergic neurons in the brain. Its relevance in the snake venom is not clear. However, it has been shown to inhibit metalloproteinase-dependent proteolysis of platelet glycoprotein Ib alpha, suggesting a metalloproteinase inhibition to prevent metalloprotease autodigestion and/or protection against prey proteases. Binds a lipid between the two protein chains in the homodimer. The lipid-bound form promotes histamine relase from mouse mast cells, contrary to the lipid-free form. The polypeptide is Venom nerve growth factor 3 (Notechis scutatus scutatus (Mainland tiger snake)).